Consider the following 209-residue polypeptide: Uracil phosphoribosyltransferase (209 aa).

5-phospho-alpha-D-ribose 1-diphosphate is bound by residues arginine 79, arginine 104, and 131–139 (DPMLATGGS). Uracil-binding positions include isoleucine 194 and 199-201 (GDA). Aspartate 200 contacts 5-phospho-alpha-D-ribose 1-diphosphate.

It belongs to the UPRTase family. It depends on Mg(2+) as a cofactor.

The catalysed reaction is UMP + diphosphate = 5-phospho-alpha-D-ribose 1-diphosphate + uracil. The protein operates within pyrimidine metabolism; UMP biosynthesis via salvage pathway; UMP from uracil: step 1/1. Allosterically activated by GTP. In terms of biological role, catalyzes the conversion of uracil and 5-phospho-alpha-D-ribose 1-diphosphate (PRPP) to UMP and diphosphate. This is Uracil phosphoribosyltransferase from Oceanobacillus iheyensis (strain DSM 14371 / CIP 107618 / JCM 11309 / KCTC 3954 / HTE831).